We begin with the raw amino-acid sequence, 846 residues long: Leucine--tRNA ligase (846 aa).

The 'HIGH' region signature appears at 47-57 (PYPSGRIHMGH). The 'KMSKS' region motif lies at 621–625 (KMSKS). ATP is bound at residue Lys624.

Belongs to the class-I aminoacyl-tRNA synthetase family.

It localises to the cytoplasm. The enzyme catalyses tRNA(Leu) + L-leucine + ATP = L-leucyl-tRNA(Leu) + AMP + diphosphate. This is Leucine--tRNA ligase from Zymomonas mobilis subsp. mobilis (strain ATCC 31821 / ZM4 / CP4).